Consider the following 490-residue polypeptide: Cytochrome P450 2C9 (490 aa).

Residue C435 coordinates heme.

This sequence belongs to the cytochrome P450 family. Heme serves as cofactor.

It localises to the endoplasmic reticulum membrane. It is found in the microsome membrane. It catalyses the reaction an organic molecule + reduced [NADPH--hemoprotein reductase] + O2 = an alcohol + oxidized [NADPH--hemoprotein reductase] + H2O + H(+). It carries out the reaction (5Z,8Z,11Z,14Z)-eicosatetraenoate + reduced [NADPH--hemoprotein reductase] + O2 = (8R,9S)-epoxy-(5Z,11Z,14Z)-eicosatrienoate + oxidized [NADPH--hemoprotein reductase] + H2O + H(+). The enzyme catalyses (5Z,8Z,11Z,14Z)-eicosatetraenoate + reduced [NADPH--hemoprotein reductase] + O2 = (8S,9R)-epoxy-(5Z,11Z,14Z)-eicosatrienoate + oxidized [NADPH--hemoprotein reductase] + H2O + H(+). The catalysed reaction is (5Z,8Z,11Z,14Z)-eicosatetraenoate + reduced [NADPH--hemoprotein reductase] + O2 = (11R,12S)-epoxy-(5Z,8Z,14Z)-eicosatrienoate + oxidized [NADPH--hemoprotein reductase] + H2O + H(+). It catalyses the reaction (5Z,8Z,11Z,14Z)-eicosatetraenoate + reduced [NADPH--hemoprotein reductase] + O2 = (11S,12R)-epoxy-(5Z,8Z,14Z)-eicosatrienoate + oxidized [NADPH--hemoprotein reductase] + H2O + H(+). It carries out the reaction (5Z,8Z,11Z,14Z)-eicosatetraenoate + reduced [NADPH--hemoprotein reductase] + O2 = (14R,15S)-epoxy-(5Z,8Z,11Z)-eicosatrienoate + oxidized [NADPH--hemoprotein reductase] + H2O + H(+). The enzyme catalyses (5Z,8Z,11Z,14Z)-eicosatetraenoate + reduced [NADPH--hemoprotein reductase] + O2 = (14S,15R)-epoxy-(5Z,8Z,11Z)-eicosatrienoate + oxidized [NADPH--hemoprotein reductase] + H2O + H(+). The catalysed reaction is (5Z,8Z,11Z,14Z,17Z)-eicosapentaenoate + reduced [NADPH--hemoprotein reductase] + O2 = 8,9-epoxy-(5Z,11Z,14Z,17Z)-eicosatetraenoate + oxidized [NADPH--hemoprotein reductase] + H2O + H(+). It catalyses the reaction (5Z,8Z,11Z,14Z,17Z)-eicosapentaenoate + reduced [NADPH--hemoprotein reductase] + O2 = 11,12-epoxy-(5Z,8Z,14Z,17Z)-eicosatetraenoate + oxidized [NADPH--hemoprotein reductase] + H2O + H(+). It carries out the reaction (5Z,8Z,11Z,14Z,17Z)-eicosapentaenoate + reduced [NADPH--hemoprotein reductase] + O2 = 14,15-epoxy-(5Z,8Z,11Z,17Z)-eicosatetraenoate + oxidized [NADPH--hemoprotein reductase] + H2O + H(+). The enzyme catalyses (5Z,8Z,11Z,14Z,17Z)-eicosapentaenoate + reduced [NADPH--hemoprotein reductase] + O2 = (17R,18S)-epoxy-(5Z,8Z,11Z,14Z)-eicosatetraenoate + oxidized [NADPH--hemoprotein reductase] + H2O + H(+). The catalysed reaction is cholesterol + reduced [NADPH--hemoprotein reductase] + O2 = 25-hydroxycholesterol + oxidized [NADPH--hemoprotein reductase] + H2O + H(+). It catalyses the reaction 17beta-estradiol + reduced [NADPH--hemoprotein reductase] + O2 = 2-hydroxy-17beta-estradiol + oxidized [NADPH--hemoprotein reductase] + H2O + H(+). It carries out the reaction estrone + reduced [NADPH--hemoprotein reductase] + O2 = 2-hydroxyestrone + oxidized [NADPH--hemoprotein reductase] + H2O + H(+). The enzyme catalyses (5Z,8Z,11Z,14Z)-eicosatetraenoate + reduced [NADPH--hemoprotein reductase] + O2 = (11R)-hydroxy-(5Z,8Z,12E,14Z)-eicosatetraenoate + oxidized [NADPH--hemoprotein reductase] + H2O + H(+). The catalysed reaction is (5Z,8Z,11Z,14Z)-eicosatetraenoate + reduced [NADPH--hemoprotein reductase] + O2 = (12R)-hydroxy-(5Z,8Z,10E,14Z)-eicosatetraenoate + oxidized [NADPH--hemoprotein reductase] + H2O + H(+). It catalyses the reaction (5Z,8Z,11Z,14Z)-eicosatetraenoate + reduced [NADPH--hemoprotein reductase] + O2 = (15R)-hydroxy-(5Z,8Z,11Z,13E)-eicosatetraenoate + oxidized [NADPH--hemoprotein reductase] + H2O + H(+). It carries out the reaction (5Z,8Z,11Z,14Z)-eicosatetraenoate + reduced [NADPH--hemoprotein reductase] + O2 = 10-hydroxy-(5Z,8Z,11Z,14Z)-eicosatetraenoate + oxidized [NADPH--hemoprotein reductase] + H2O + H(+). The enzyme catalyses (9Z,12Z)-octadecadienoate + reduced [NADPH--hemoprotein reductase] + O2 = (13R)-hydroxy-(9Z,11E)-octadecadienoate + oxidized [NADPH--hemoprotein reductase] + H2O + H(+). The catalysed reaction is (9Z,12Z)-octadecadienoate + reduced [NADPH--hemoprotein reductase] + O2 = (9R)-hydroxy-(10E,12Z)-octadecadienoate + oxidized [NADPH--hemoprotein reductase] + H2O + H(+). It catalyses the reaction (5Z,8Z,11Z,14Z)-eicosatetraenoate + reduced [NADPH--hemoprotein reductase] + O2 = 19-hydroxy-(5Z,8Z,11Z,14Z)-eicosatetraenoate + oxidized [NADPH--hemoprotein reductase] + H2O + H(+). It carries out the reaction (5Z,8Z,11Z,14Z)-eicosatetraenoate + reduced [NADPH--hemoprotein reductase] + O2 = 13(S)-hydroxy-(5Z,8Z,11Z,14Z)-eicosatetraenoate + oxidized [NADPH--hemoprotein reductase] + H2O + H(+). The enzyme catalyses (5Z,8Z,11Z,14Z)-eicosatetraenoate + reduced [NADPH--hemoprotein reductase] + O2 = 14,15-epoxy-(5Z,8Z,11Z)-eicosatrienoate + oxidized [NADPH--hemoprotein reductase] + H2O + H(+). The catalysed reaction is (5Z,8Z,11Z,14Z)-eicosatetraenoate + reduced [NADPH--hemoprotein reductase] + O2 = 11,12-epoxy-(5Z,8Z,14Z)-eicosatrienoate + oxidized [NADPH--hemoprotein reductase] + H2O + H(+). It catalyses the reaction (5Z,8Z,11Z,14Z)-eicosatetraenoate + reduced [NADPH--hemoprotein reductase] + O2 = 13-hydroxy-(5Z,8Z,11Z,14Z)-eicosatetraenoate + oxidized [NADPH--hemoprotein reductase] + H2O + H(+). It carries out the reaction (4R)-limonene + reduced [NADPH--hemoprotein reductase] + O2 = (1R,5S)-carveol + oxidized [NADPH--hemoprotein reductase] + H2O + H(+). The enzyme catalyses (4S)-limonene + reduced [NADPH--hemoprotein reductase] + O2 = (1S,5R)-carveol + oxidized [NADPH--hemoprotein reductase] + H2O + H(+). The catalysed reaction is (4S)-limonene + reduced [NADPH--hemoprotein reductase] + O2 = (4S)-perillyl alcohol + oxidized [NADPH--hemoprotein reductase] + H2O + H(+). It participates in lipid metabolism; arachidonate metabolism. Its pathway is steroid metabolism; cholesterol metabolism. It functions in the pathway terpene metabolism; (4R)-limonene degradation. Its function is as follows. A cytochrome P450 monooxygenase involved in the metabolism of various endogenous substrates, including fatty acids and steroids. Mechanistically, uses molecular oxygen inserting one oxygen atom into a substrate, and reducing the second into a water molecule, with two electrons provided by NADPH via cytochrome P450 reductase (NADPH--hemoprotein reductase). Catalyzes the epoxidation of double bonds of polyunsaturated fatty acids (PUFA). Catalyzes the hydroxylation of carbon-hydrogen bonds. Metabolizes cholesterol toward 25-hydroxycholesterol, a physiological regulator of cellular cholesterol homeostasis. Exhibits low catalytic activity for the formation of catechol estrogens from 17beta-estradiol (E2) and estrone (E1), namely 2-hydroxy E1 and E2. Catalyzes bisallylic hydroxylation and hydroxylation with double-bond migration of polyunsaturated fatty acids (PUFA). Also metabolizes plant monoterpenes such as limonene. Oxygenates (R)- and (S)-limonene to produce carveol and perillyl alcohol. Contributes to the wide pharmacokinetics variability of the metabolism of drugs such as S-warfarin, diclofenac, phenytoin, tolbutamide and losartan. The polypeptide is Cytochrome P450 2C9 (Homo sapiens (Human)).